The sequence spans 199 residues: Recombination protein RecR (199 aa).

Residues 58–73 form a C4-type zinc finger; that stretch reads CSVCGNLTDTDVCPLC. A Toprim domain is found at 81–176; the sequence is SVICVVEDPR…KTTRIAHGIP (96 aa).

It belongs to the RecR family.

Functionally, may play a role in DNA repair. It seems to be involved in an RecBC-independent recombinational process of DNA repair. It may act with RecF and RecO. The polypeptide is Recombination protein RecR (Acetivibrio thermocellus (strain ATCC 27405 / DSM 1237 / JCM 9322 / NBRC 103400 / NCIMB 10682 / NRRL B-4536 / VPI 7372) (Clostridium thermocellum)).